Here is a 649-residue protein sequence, read N- to C-terminus: Protein WHI4 (649 aa).

Residues S22 and S206 each carry the phosphoserine modification. Disordered regions lie at residues 196–217 (EHVS…SSAQ) and 228–247 (ISYG…KPRP). The segment covering 228 to 238 (ISYGKTSSSPL) has biased composition (polar residues). Residues S258 and S283 each carry the phosphoserine modification. 2 disordered regions span residues 438-461 (LDLN…SIFN) and 604-649 (QLPH…YGKS). Residues 533–625 (NTLYVGNLPP…GGIRLSFSKN (93 aa)) enclose the RRM domain. Positions 631 to 649 (GSNSRSKSGYSFNGSYGKS) are enriched in polar residues.

Post-translationally, phosphorylated by PKA in vitro.

The protein resides in the cytoplasm. Its function is as follows. Has a partially redundant function to WHI3, a dosage-dependent modulator of cell size. The chain is Protein WHI4 (WHI4) from Saccharomyces cerevisiae (strain ATCC 204508 / S288c) (Baker's yeast).